A 201-amino-acid chain; its full sequence is Guanylate kinase (201 aa).

A Guanylate kinase-like domain is found at 10-195 (GKIIILSGPS…CVEEVKNILK (186 aa)). 17–24 (GPSGVGKG) is an ATP binding site.

It belongs to the guanylate kinase family.

The protein localises to the cytoplasm. The catalysed reaction is GMP + ATP = GDP + ADP. Essential for recycling GMP and indirectly, cGMP. This is Guanylate kinase from Mycoplasma mobile (strain ATCC 43663 / 163K / NCTC 11711) (Mesomycoplasma mobile).